The sequence spans 262 residues: Diaminopimelate epimerase (262 aa).

Positions 17, 45, and 63 each coordinate substrate. Cys-72 functions as the Proton donor in the catalytic mechanism. Residues 73 to 74, Asn-154, Asn-187, and 205 to 206 each bind substrate; these read GN and ER. Catalysis depends on Cys-214, which acts as the Proton acceptor. Residue 215-216 participates in substrate binding; the sequence is GS.

The protein belongs to the diaminopimelate epimerase family. As to quaternary structure, homodimer.

It localises to the cytoplasm. The enzyme catalyses (2S,6S)-2,6-diaminopimelate = meso-2,6-diaminopimelate. It functions in the pathway amino-acid biosynthesis; L-lysine biosynthesis via DAP pathway; DL-2,6-diaminopimelate from LL-2,6-diaminopimelate: step 1/1. Catalyzes the stereoinversion of LL-2,6-diaminopimelate (L,L-DAP) to meso-diaminopimelate (meso-DAP), a precursor of L-lysine and an essential component of the bacterial peptidoglycan. This is Diaminopimelate epimerase from Wolbachia sp. subsp. Drosophila simulans (strain wRi).